The sequence spans 89 residues: Small ribosomal subunit protein bS20 (89 aa).

Basic residues-rich tracts occupy residues 1-10 (MANIKSKIKS) and 17-29 (ARKRNSMIKSRVK). The segment at 1–29 (MANIKSKIKSIKTMEKARKRNSMIKSRVK) is disordered.

It belongs to the bacterial ribosomal protein bS20 family.

Binds directly to 16S ribosomal RNA. The protein is Small ribosomal subunit protein bS20 of Mycoplasmopsis pulmonis (strain UAB CTIP) (Mycoplasma pulmonis).